Reading from the N-terminus, the 403-residue chain is MGSLSNYSPVMEDVQAIRKAQKADGTATVMAIGTAHPPHIFPQDTYADFYFRATNSEHKVELKKKFDRICKKTMIGKRYFNYDEEFLKKYPNITSFDEPSLNDRQDICVPGVPALGAEAAVKAIAEWGRPKSEITHLVFCTSCGVDMPSADFQCAKLLGLRTNVNKYCVYMQGCYAGGTVMRYAKDLAENNRGARVLVVCAELTIIGLRGPNESHLDNAIGNSLFGDGAAALIVGSDPIIGVERPMFEIVCAKQTVIPNSEDVIHLHMREAGLMFYMSKDSPETISNNVEACLVDVFKSVGMTPPEDWNSLFWIPHPGGRAILDQVEARLKLRPEKFGATRTVLWDCGNMVSACVLYILDEMRRKSVADGLATYGEGLEWGVLLGFGPGMTVETILLHSLPPV.

The active site involves Cys174. CoA-binding positions include Ser281 and 318–321; that span reads GGRA.

This sequence belongs to the thiolase-like superfamily. Chalcone/stilbene synthases family. Homodimer.

It functions in the pathway secondary metabolite biosynthesis; flavonoid biosynthesis. In terms of biological role, catalyzes the iterative condensations of 8 molecules of malonyl-CoA to produce aromatic octaketides, SEK4 and SEK4b, the products of the minimal polyketide synthase for the benzoisochromanequinone actinorhodin. May be involved in the biosynthesis of the octaketide barbaloin. In Aloe arborescens (Kidachi aloe), this protein is Octaketide synthase 2 (PKS4).